The chain runs to 227 residues: Phosphatidate cytidylyltransferase (227 aa).

Helical transmembrane passes span 31–51, 65–85, 93–113, 131–151, 165–185, and 206–226; these read FVIAILWFKPLFYILMILVGM, IPYLLIGLIIIPIPISLLTFL, WLIMLYFCIIWSVDSFAMIGG, WSGLVTGVLSAGLVAVLASFI, IYLFIISCILALIAQSSDLFI, and GVLDRFDSIILTAPVLFFISI.

The protein belongs to the CDS family.

It localises to the cell membrane. It carries out the reaction a 1,2-diacyl-sn-glycero-3-phosphate + CTP + H(+) = a CDP-1,2-diacyl-sn-glycerol + diphosphate. Its pathway is phospholipid metabolism; CDP-diacylglycerol biosynthesis; CDP-diacylglycerol from sn-glycerol 3-phosphate: step 3/3. The protein is Phosphatidate cytidylyltransferase (cdsA) of Rickettsia felis (strain ATCC VR-1525 / URRWXCal2) (Rickettsia azadi).